The sequence spans 503 residues: 2-isopropylmalate synthase (503 aa).

Residues Asp1, His189, His191, and Asn225 each coordinate Mn(2+). Positions 1-254 (DGEQALQASL…STNINHKEIY (254 aa)) constitute a Pyruvate carboxyltransferase domain. Residues 379–503 (SLKFFSVQSI…NKNLKNLKKQ (125 aa)) are regulatory domain.

It belongs to the alpha-IPM synthase/homocitrate synthase family. LeuA type 1 subfamily. As to quaternary structure, homodimer. Mn(2+) is required as a cofactor.

The protein localises to the cytoplasm. The catalysed reaction is 3-methyl-2-oxobutanoate + acetyl-CoA + H2O = (2S)-2-isopropylmalate + CoA + H(+). The protein operates within amino-acid biosynthesis; L-leucine biosynthesis; L-leucine from 3-methyl-2-oxobutanoate: step 1/4. Functionally, catalyzes the condensation of the acetyl group of acetyl-CoA with 3-methyl-2-oxobutanoate (2-ketoisovalerate) to form 3-carboxy-3-hydroxy-4-methylpentanoate (2-isopropylmalate). This is 2-isopropylmalate synthase from Buchnera aphidicola subsp. Uroleucon ambrosiae.